Reading from the N-terminus, the 604-residue chain is Protein hemingway (604 aa).

Disordered stretches follow at residues 1–70 (MSGA…GNPH), 103–309 (NQLS…PTSQ), 359–387 (SDRR…GGGI), and 544–585 (TIKA…IDLD). Acidic residues-rich tracts occupy residues 8–38 (SDEE…YIEP), 135–183 (EDEA…DDAQ), 194–214 (DDSD…EDEP), and 288–300 (EEPE…EENQ). Residues 368-379 (EMSSMTETTMTS) are compositionally biased toward low complexity.

It belongs to the CFAP97 family. In terms of tissue distribution, detected in ciliated sensory neurons at all stages of development, and in adult testis.

It is found in the cell projection. Its subcellular location is the cilium. The protein resides in the perikaryon. It localises to the cytoplasm. Involved in assembly and/or maintenance of motile cilia. Required during spermatogenesis for axoneme elongation. Necessary for optimal function of the chordotonal (hearing) organs. This Drosophila melanogaster (Fruit fly) protein is Protein hemingway.